The following is a 307-amino-acid chain: Elongation factor Ts (307 aa).

Positions 80–83 (TDFV) are involved in Mg(2+) ion dislocation from EF-Tu.

It belongs to the EF-Ts family.

It is found in the cytoplasm. Associates with the EF-Tu.GDP complex and induces the exchange of GDP to GTP. It remains bound to the aminoacyl-tRNA.EF-Tu.GTP complex up to the GTP hydrolysis stage on the ribosome. This is Elongation factor Ts from Nitrobacter hamburgensis (strain DSM 10229 / NCIMB 13809 / X14).